Consider the following 355-residue polypeptide: Oligopeptide transport ATP-binding protein AmiE (355 aa).

The ABC transporter domain maps to 9-260 (LTARDIVVEF…PRHPYTWSLL (252 aa)). An ATP-binding site is contributed by 45 to 52 (GESGSGKS).

The protein belongs to the ABC transporter superfamily.

It localises to the cell membrane. Its function is as follows. Part of the binding-protein-dependent transport system for oligopeptides. Probably responsible for energy coupling to the transport system. The sequence is that of Oligopeptide transport ATP-binding protein AmiE (amiE) from Streptococcus pneumoniae serotype 4 (strain ATCC BAA-334 / TIGR4).